The following is a 142-amino-acid chain: Large ribosomal subunit protein uL11 (142 aa).

The protein belongs to the universal ribosomal protein uL11 family. As to quaternary structure, part of the ribosomal stalk of the 50S ribosomal subunit. Interacts with L10 and the large rRNA to form the base of the stalk. L10 forms an elongated spine to which L12 dimers bind in a sequential fashion forming a multimeric L10(L12)X complex. Post-translationally, one or more lysine residues are methylated.

Forms part of the ribosomal stalk which helps the ribosome interact with GTP-bound translation factors. The polypeptide is Large ribosomal subunit protein uL11 (Serratia proteamaculans (strain 568)).